A 298-amino-acid chain; its full sequence is Acidic endochitinase (298 aa).

An N-terminal signal peptide occupies residues 1 to 29 (MKPNMACLKQVSALLLPLLFISFFKPSHA). One can recognise a GH18 domain in the interval 30-298 (GGISVYWGQN…GYSGAIIGSV (269 aa)). Disulfide bonds link Cys-49–Cys-96 and Cys-79–Cys-86. The active-site Proton donor is Glu-156. The cysteines at positions 185 and 214 are disulfide-linked.

Belongs to the glycosyl hydrolase 18 family. Chitinase class II subfamily.

Its subcellular location is the secreted. It is found in the extracellular space. The catalysed reaction is Random endo-hydrolysis of N-acetyl-beta-D-glucosaminide (1-&gt;4)-beta-linkages in chitin and chitodextrins.. Its function is as follows. This protein functions as a defense against chitin containing fungal pathogens. In Phaseolus angularis (Azuki bean), this protein is Acidic endochitinase.